A 171-amino-acid chain; its full sequence is MDYFTLFGLPARYQLDTQALSLRFQDLQRQYHPDKFASGSQAEQLAAVQQSATINQAWQTLRHPLMRAEYLLSLHGFDLASEQHTVRDTAFLMEQLELREELDEIEQAKDEARLESFIKRVKKMFDTRHQLMVEQLDNETWDAAADTVRKLRFLDKLRSSAEQLEEKLLDF.

The J domain maps to 2-74 (DYFTLFGLPA…LMRAEYLLSL (73 aa)).

It belongs to the HscB family. As to quaternary structure, interacts with HscA and stimulates its ATPase activity. Interacts with IscU.

Its function is as follows. Co-chaperone involved in the maturation of iron-sulfur cluster-containing proteins. Seems to help targeting proteins to be folded toward HscA. The polypeptide is Co-chaperone protein HscB (Shigella boydii serotype 18 (strain CDC 3083-94 / BS512)).